We begin with the raw amino-acid sequence, 396 residues long: MAAEATLGPNVSWWAPSNASGCPGCGVNASDGPGSAPRPLDAWLVPLFFAALMLLGLVGNSLVIFVICRHKHMQTVTNFYIANLAATDVTFLLCCVPFTALLYPLPTWVLGDFMCKFVNYIQQVSVQATCATLTAMSVDRWYVTVFPLRALHRRTPRLALTVSLSIWVGSAAVSAPVLALHRLSPGPHTYCSEAFPSRALERAFALYNLLALYLLPLLATCACYGAMLRHLGRAAVRPAPTDGALQGQLLAQRAGAVRTKVSRLVAAVVLLFAACWGPIQLFLVLQALGPSGAWHPRSYAAYALKIWAHCMSYSNSALNPLLYAFLGSHFRQAFCRVCPCGPQRQRRPHASAHSDRAAPHSVPHSRAAHPVRVRTPEPGNPVRRSPSVQDEHTAPL.

Residues 1–46 (MAAEATLGPNVSWWAPSNASGCPGCGVNASDGPGSAPRPLDAWLVP) lie on the Extracellular side of the membrane. Residues N10, N18, and N28 are each glycosylated (N-linked (GlcNAc...) asparagine). The chain crosses the membrane as a helical span at residues 47 to 67 (LFFAALMLLGLVGNSLVIFVI). Residues 68–90 (CRHKHMQTVTNFYIANLAATDVT) lie on the Cytoplasmic side of the membrane. Residues 91 to 111 (FLLCCVPFTALLYPLPTWVLG) traverse the membrane as a helical segment. Residues 112-120 (DFMCKFVNY) lie on the Extracellular side of the membrane. C115 and C191 are oxidised to a cystine. The helical transmembrane segment at 121–138 (IQQVSVQATCATLTAMSV) threads the bilayer. Residues 139–159 (DRWYVTVFPLRALHRRTPRLA) lie on the Cytoplasmic side of the membrane. Residues 160 to 180 (LTVSLSIWVGSAAVSAPVLAL) traverse the membrane as a helical segment. The Extracellular segment spans residues 181–202 (HRLSPGPHTYCSEAFPSRALER). Residues 203–223 (AFALYNLLALYLLPLLATCAC) traverse the membrane as a helical segment. Residues 224 to 264 (YGAMLRHLGRAAVRPAPTDGALQGQLLAQRAGAVRTKVSRL) lie on the Cytoplasmic side of the membrane. The chain crosses the membrane as a helical span at residues 265–285 (VAAVVLLFAACWGPIQLFLVL). Residues 286-305 (QALGPSGAWHPRSYAAYALK) are Extracellular-facing. The helical transmembrane segment at 306-326 (IWAHCMSYSNSALNPLLYAFL) threads the bilayer. The Cytoplasmic portion of the chain corresponds to 327-396 (GSHFRQAFCR…SVQDEHTAPL (70 aa)). Residues 346–396 (RRPHASAHSDRAAPHSVPHSRAAHPVRVRTPEPGNPVRRSPSVQDEHTAPL) are disordered.

Belongs to the G-protein coupled receptor 1 family. Highest expression levels in the cerebrum and cecum. Moderate expression in the ovary, colon and placenta. Low levels in the uterus, small intestine, and thymus. Expressed only moderately in the placenta. No expression in kidney tissues. Has a complex and abundant central nervous system expression pattern. Expressed in brain regions such as pons, midbrain, thalamus, hypothalamus, hippocampus, amygdala, cortex, frontal cortex, and striatum. No expression in the cerebellum. Persistent expression is detected in hypothalamus throughout postnatal development, with maximum expression levels at puberty in both male and female. Hypothalamic expression changed throughout the estrus cycle and is significantly increased after gonadectomy, a rise that is prevented by sex steroid replacement both in males and females.

It localises to the cell membrane. Receptor for metastin, a C-terminally amidated peptide of KiSS1. KiSS1 is a metastasis suppressor protein. Activation of the receptor inhibits cell proliferation and cell migration, key characteristics of tumor metastasis. The receptor is essential for normal gonadotropin-released hormone physiology and for puberty. The hypothalamic KiSS1/KISS1R system is a pivotal factor in central regulation of the gonadotropic axis at puberty and in adulthood. Analysis of the transduction pathways activated by the receptor identifies coupling to phospholipase C and intracellular calcium release through pertussis toxin-insensitive G(q) proteins. The chain is KiSS-1 receptor (Kiss1r) from Rattus norvegicus (Rat).